A 551-amino-acid polypeptide reads, in one-letter code: Calcium-dependent protein kinase 19 (551 aa).

Gly2 carries the N-myristoyl glycine lipid modification. The interval 12–46 (VKKPTPDISGEQNTEVKSREITPKEQPRQRQPAPR) is disordered. The segment covering 25 to 39 (TEVKSREITPKEQPR) has biased composition (basic and acidic residues). In terms of domain architecture, Protein kinase spans 98 to 357 (YSLGRELGRG…AAQVLEHPWI (260 aa)). Residues 104–112 (LGRGQFGIT) and Lys127 contribute to the ATP site. Asp222 functions as the Proton acceptor in the catalytic mechanism. Position 263 is a phosphoserine (Ser263). The segment at 363–393 (ASDKPIDSAVLSRMKQLRAMNKLKKLAFKFI) is autoinhibitory domain. EF-hand domains lie at 400–435 (EELK…LGSR), 436–471 (LTET…RFRV), 472–507 (ERED…YNMG), and 512–542 (IKEI…CSQS). Residues Asp413, Asp415, Ser417, Thr419, Glu424, Asp449, Asp451, Asn453, Thr455, Glu460, Asp485, Asp487, Ser489, Glu496, Asp520, Asp522, Asp524, Ser526, and Glu531 each coordinate Ca(2+).

Belongs to the protein kinase superfamily. Ser/Thr protein kinase family. CDPK subfamily.

The protein resides in the membrane. The catalysed reaction is L-seryl-[protein] + ATP = O-phospho-L-seryl-[protein] + ADP + H(+). It carries out the reaction L-threonyl-[protein] + ATP = O-phospho-L-threonyl-[protein] + ADP + H(+). With respect to regulation, activated by calcium. Autophosphorylation may play an important role in the regulation of the kinase activity. May play a role in signal transduction pathways that involve calcium as a second messenger. This chain is Calcium-dependent protein kinase 19 (CPK19), found in Arabidopsis thaliana (Mouse-ear cress).